The chain runs to 599 residues: Aspartate--tRNA(Asp/Asn) ligase (599 aa).

An L-aspartate-binding site is contributed by glutamate 172. The interval 196 to 199 is aspartate; sequence QLFK. Arginine 218 contacts L-aspartate. ATP is bound by residues 218–220 and glutamine 227; that span reads RDE. Histidine 455 is a binding site for L-aspartate. Glutamate 489 contributes to the ATP binding site. Arginine 496 contributes to the L-aspartate binding site. ATP is bound at residue 541 to 544; that stretch reads GLDR.

This sequence belongs to the class-II aminoacyl-tRNA synthetase family. Type 1 subfamily. Homodimer.

Its subcellular location is the cytoplasm. The catalysed reaction is tRNA(Asx) + L-aspartate + ATP = L-aspartyl-tRNA(Asx) + AMP + diphosphate. Aspartyl-tRNA synthetase with relaxed tRNA specificity since it is able to aspartylate not only its cognate tRNA(Asp) but also tRNA(Asn). Reaction proceeds in two steps: L-aspartate is first activated by ATP to form Asp-AMP and then transferred to the acceptor end of tRNA(Asp/Asn). This is Aspartate--tRNA(Asp/Asn) ligase from Herminiimonas arsenicoxydans.